Here is a 464-residue protein sequence, read N- to C-terminus: Soluble pyridine nucleotide transhydrogenase (464 aa).

FAD is bound at residue 35–44 (DSRRQVGGNC).

Belongs to the class-I pyridine nucleotide-disulfide oxidoreductase family. The cofactor is FAD.

Its subcellular location is the cytoplasm. The enzyme catalyses NAD(+) + NADPH = NADH + NADP(+). In terms of biological role, conversion of NADPH, generated by peripheral catabolic pathways, to NADH, which can enter the respiratory chain for energy generation. In Pseudomonas fluorescens (strain ATCC BAA-477 / NRRL B-23932 / Pf-5), this protein is Soluble pyridine nucleotide transhydrogenase.